The sequence spans 142 residues: Glia maturation factor beta (142 aa).

Ser2 is modified (N-acetylserine). The ADF-H domain maps to 4 to 139 (SLVVCDVAED…TEEWLREKLG (136 aa)).

This sequence belongs to the actin-binding proteins ADF family. GMF subfamily. Phosphorylated; stimulated by phorbol ester.

In terms of biological role, this protein causes differentiation of brain cells, stimulation of neural regeneration, and inhibition of proliferation of tumor cells. This Mus musculus (Mouse) protein is Glia maturation factor beta (Gmfb).